Consider the following 109-residue polypeptide: Large ribosomal subunit protein uL24 (109 aa).

The protein belongs to the universal ribosomal protein uL24 family. Part of the 50S ribosomal subunit.

Functionally, one of two assembly initiator proteins, it binds directly to the 5'-end of the 23S rRNA, where it nucleates assembly of the 50S subunit. Its function is as follows. One of the proteins that surrounds the polypeptide exit tunnel on the outside of the subunit. The protein is Large ribosomal subunit protein uL24 of Ehrlichia ruminantium (strain Gardel).